We begin with the raw amino-acid sequence, 430 residues long: MLDPNLLRTEPDAVAEKLARRGFKLDVDKLRALEERRKVLQVQTENLQAERNSRSKSIGQAKARGEDIEPLRLEVNKLGEQLDAAKSELETLLAEIRDIALAIPNIPHDDVPVGRDENDNVEVSRWGTPRQFDFEVRDHVTLGEMHGGLDFAAAVKLTGSRFVVMKGQLARLHRALAQFMLDLHTEQHGYSENYVPYLVNQDTLYGTGQLPKFAGDLFHTRPLEEEADSSNYALIPTAEVPLTNLVRDEIIDEDDLPIKMTAHTPCFRSEAGSYGRDTRGLIRMHQFDKVEMVQIVRPEDSMAALEEMTGHAEKVLQLLGLPYRKVALCTGDMGFSACKTYDLEVWVPAQNTYREISSCSNVWDFQARRMQARCRSKSDKKTRLVHTLNGSGLAVGRTLVALMENYQQADGRIEIPEVLRPYMRGLEYIG.

Residue 237-239 (TAE) coordinates L-serine. ATP is bound at residue 268 to 270 (RSE). Position 291 (glutamate 291) interacts with L-serine. 355-358 (EISS) serves as a coordination point for ATP. L-serine is bound at residue serine 391.

This sequence belongs to the class-II aminoacyl-tRNA synthetase family. Type-1 seryl-tRNA synthetase subfamily. In terms of assembly, homodimer. The tRNA molecule binds across the dimer.

The protein localises to the cytoplasm. The catalysed reaction is tRNA(Ser) + L-serine + ATP = L-seryl-tRNA(Ser) + AMP + diphosphate + H(+). It catalyses the reaction tRNA(Sec) + L-serine + ATP = L-seryl-tRNA(Sec) + AMP + diphosphate + H(+). The protein operates within aminoacyl-tRNA biosynthesis; selenocysteinyl-tRNA(Sec) biosynthesis; L-seryl-tRNA(Sec) from L-serine and tRNA(Sec): step 1/1. In terms of biological role, catalyzes the attachment of serine to tRNA(Ser). Is also able to aminoacylate tRNA(Sec) with serine, to form the misacylated tRNA L-seryl-tRNA(Sec), which will be further converted into selenocysteinyl-tRNA(Sec). In Klebsiella pneumoniae subsp. pneumoniae (strain ATCC 700721 / MGH 78578), this protein is Serine--tRNA ligase.